Reading from the N-terminus, the 332-residue chain is MAPAQRCPLCRQTFFCGRGHVYSRKHQRQLKEALERLLPQVEAARKAIRAAQVERYVPEHERCCWCLCCGCEVREHLSHGNLTVLYGGLLEHLASPEHKKATNKFWWENKAEVQMKEKFLVTPQDYARFKKSMVKGLDSYEEKEDKVIKEMAAQIREVEQSRQEVVRSVLEPQAVPDPEEGSSAPRSWKGMNSQVASSLQQPSNLDLPPAPELDWMETGPSLTFIGHQDIPGVGNIHSGATPPWMIQDEEYIAGNQEIGPSYEEFLKEKEKQKLKKLPPDRVGANFDHSSRTSAGWLPSFGRVWNNGRRWQSRHQFKTEAAAMKKQSHTEKS.

The interval 1–169 is required for centrosome location; sequence MAPAQRCPLC…QSRQEVVRSV (169 aa). K31 carries the N6-acetyllysine; by NAT10 modification. Residues 137 to 168 adopt a coiled-coil conformation; sequence LDSYEEKEDKVIKEMAAQIREVEQSRQEVVRS. Residues 169–213 are disordered; it reads VLEPQAVPDPEEGSSAPRSWKGMNSQVASSLQQPSNLDLPPAPEL. Residues 190 to 204 show a composition bias toward polar residues; sequence GMNSQVASSLQQPSN.

In terms of assembly, interacts with SASS6; the interaction increases with CENATAC acetylation. In terms of processing, acetylated. Acetylation oscillates throughout the cell cycle, and the acetylation state at Lys-31 is regulated by the deacetylase SIRT1 and the acetyltransferase NAT10. Deacetylated CENATAC is responsible for its centrosome targeting, and acetylated CENATAC promotes SASS6 degradation by enhancing the binding affinity of SASS6 for APC/C E3 ubiquitin-protein ligase complex/FZR1.

It is found in the cytoplasm. It localises to the cytoskeleton. Its subcellular location is the microtubule organizing center. The protein resides in the centrosome. Functionally, component of the minor spliceosome that promotes splicing of a specific, rare minor intron subtype. Negative regulator of centrosome duplication. Constrains centriole number by modulating the degradation of the centrosome-duplication-associated protein SASS6 in an acetylation-dependent manner. SIRT1 deacetylates CENATAC in G1 phase, allowing for SASS6 accumulation on the centrosome and subsequent procentriole assembly. The CENATAC acetylation level is restored in mitosis by NAT10, promoting SASS6 proteasome degradation by facilitating SASS6 binding to APC/C E3 ubiquitin-protein ligase complex/FZR1. This is Centrosomal AT-AC splicing factor from Homo sapiens (Human).